We begin with the raw amino-acid sequence, 103 residues long: MADQKIRIRLKAFDHRLIDRSASEIVETAKRTGAQVRGPIPLPTKIERYTILVSPHADKDARDQYETRTHKRVLDIVDPNDKTVDALMKLELAAGVDVQIKLT.

Belongs to the universal ribosomal protein uS10 family. As to quaternary structure, part of the 30S ribosomal subunit.

Involved in the binding of tRNA to the ribosomes. In Xanthomonas campestris pv. campestris (strain B100), this protein is Small ribosomal subunit protein uS10.